A 967-amino-acid polypeptide reads, in one-letter code: Isoleucine--tRNA ligase (967 aa).

Positions 68-78 match the 'HIGH' region motif; sequence PYANGTLHMGH. Glutamate 583 lines the L-isoleucyl-5'-AMP pocket. Positions 624–628 match the 'KMSKS' region motif; sequence KMSKS. ATP is bound at residue lysine 627. Residues cysteine 937, cysteine 940, cysteine 957, and cysteine 960 each contribute to the Zn(2+) site.

The protein belongs to the class-I aminoacyl-tRNA synthetase family. IleS type 1 subfamily. In terms of assembly, monomer. Requires Zn(2+) as cofactor.

The protein localises to the cytoplasm. It catalyses the reaction tRNA(Ile) + L-isoleucine + ATP = L-isoleucyl-tRNA(Ile) + AMP + diphosphate. Its function is as follows. Catalyzes the attachment of isoleucine to tRNA(Ile). As IleRS can inadvertently accommodate and process structurally similar amino acids such as valine, to avoid such errors it has two additional distinct tRNA(Ile)-dependent editing activities. One activity is designated as 'pretransfer' editing and involves the hydrolysis of activated Val-AMP. The other activity is designated 'posttransfer' editing and involves deacylation of mischarged Val-tRNA(Ile). The protein is Isoleucine--tRNA ligase of Prochlorococcus marinus (strain NATL2A).